We begin with the raw amino-acid sequence, 245 residues long: Uridylate kinase (245 aa).

K12–G15 serves as a coordination point for ATP. The interval G20–G25 is involved in allosteric activation by GTP. G54 lines the UMP pocket. 2 residues coordinate ATP: G55 and R59. Residues D74 and V135–T142 each bind UMP. 3 residues coordinate ATP: N163, Y169, and D172.

The protein belongs to the UMP kinase family. In terms of assembly, homohexamer.

The protein localises to the cytoplasm. The enzyme catalyses UMP + ATP = UDP + ADP. The protein operates within pyrimidine metabolism; CTP biosynthesis via de novo pathway; UDP from UMP (UMPK route): step 1/1. Its activity is regulated as follows. Allosterically activated by GTP. Inhibited by UTP. Functionally, catalyzes the reversible phosphorylation of UMP to UDP. The chain is Uridylate kinase from Streptococcus mutans serotype c (strain ATCC 700610 / UA159).